We begin with the raw amino-acid sequence, 47 residues long: Photosystem II reaction center protein K (47 aa).

Positions 1–10 (MAVYTLDLLA) are excised as a propeptide. Residues 19–39 (FGPLIDILPIIPLFFLLLAFV) traverse the membrane as a helical segment.

Belongs to the PsbK family. In terms of assembly, PSII is composed of 1 copy each of membrane proteins PsbA, PsbB, PsbC, PsbD, PsbE, PsbF, PsbH, PsbI, PsbJ, PsbK, PsbL, PsbM, PsbT, PsbX, PsbY, PsbZ, Psb30/Ycf12, peripheral proteins PsbO, CyanoQ (PsbQ), PsbU, PsbV and a large number of cofactors. It forms dimeric complexes.

Its subcellular location is the cellular thylakoid membrane. Functionally, one of the components of the core complex of photosystem II (PSII). PSII is a light-driven water:plastoquinone oxidoreductase that uses light energy to abstract electrons from H(2)O, generating O(2) and a proton gradient subsequently used for ATP formation. It consists of a core antenna complex that captures photons, and an electron transfer chain that converts photonic excitation into a charge separation. This Synechococcus sp. (strain CC9311) protein is Photosystem II reaction center protein K.